The following is a 215-amino-acid chain: Large ribosomal subunit protein bL25 (215 aa).

Polar residues-rich tracts occupy residues 1–19 (MAKS…NTGK) and 206–215 (ENKTAATESE). Disordered stretches follow at residues 1 to 29 (MAKS…RRDG) and 190 to 215 (AKYA…TESE).

This sequence belongs to the bacterial ribosomal protein bL25 family. CTC subfamily. Part of the 50S ribosomal subunit; part of the 5S rRNA/L5/L18/L25 subcomplex. Contacts the 5S rRNA. Binds to the 5S rRNA independently of L5 and L18.

This is one of the proteins that binds to the 5S RNA in the ribosome where it forms part of the central protuberance. This chain is Large ribosomal subunit protein bL25, found in Mycobacterium leprae (strain TN).